Consider the following 257-residue polypeptide: Undecaprenyl-diphosphatase (257 aa).

8 helical membrane-spanning segments follow: residues 4-24, 51-71, 78-98, 106-126, 133-153, 171-191, 207-227, and 235-255; these read LFKAIILGIIQGITEFLPISS, HVGTLISLLYCFWKDWINIFF, LFIIIGTIPAGIAGIAFHDLI, LIIVVTLILVGFLMLYAEKVG, ITLSDAVVIGTAQAIALIPGV, AYAAKFSFLLSTPAIAGAAML, LFIIGVISAAITGIIAIKFLL, and LNLFIYYRWFLAVVIFLLYFF.

The protein belongs to the UppP family.

The protein localises to the cell inner membrane. It carries out the reaction di-trans,octa-cis-undecaprenyl diphosphate + H2O = di-trans,octa-cis-undecaprenyl phosphate + phosphate + H(+). In terms of biological role, catalyzes the dephosphorylation of undecaprenyl diphosphate (UPP). Confers resistance to bacitracin. The polypeptide is Undecaprenyl-diphosphatase (Thermodesulfovibrio yellowstonii (strain ATCC 51303 / DSM 11347 / YP87)).